The primary structure comprises 1268 residues: Neurocan core protein (1268 aa).

Residues 1 to 22 (MGAGSVWASGLLLLWLLLLVAG) form the signal peptide. Positions 37 to 157 (RMLKSGSGPV…EQDLVTLEVT (121 aa)) constitute an Ig-like V-type domain. 5 cysteine pairs are disulfide-bonded: Cys58/Cys139, Cys181/Cys252, Cys205/Cys226, Cys279/Cys354, and Cys303/Cys324. A glycan (N-linked (GlcNAc...) asparagine) is linked at Asn121. Link domains are found at residues 159 to 254 (VVFH…YCFA) and 258 to 356 (GGEV…YCFR). The N-linked (GlcNAc...) asparagine glycan is linked to Asn339. Disordered stretches follow at residues 363 to 391 (QHGD…ELKP), 406 to 442 (PLMS…SWPS), 472 to 540 (PLGT…DQSH), and 574 to 630 (ISPS…LQAS). Residues Ser380 and Ser410 are each glycosylated (O-linked (Xyl...) (chondroitin sulfate) serine). A compositionally biased stretch (polar residues) spans 419–430 (TWTQAPEETLGS). The span at 575 to 585 (SPSVPSTESTP) shows a compositional bias: low complexity. Over residues 608 to 617 (PSEPPAPSPG) the composition is skewed to pro residues. Positions 618 to 630 (PSEALSAVSLQAS) are enriched in low complexity. The N-linked (GlcNAc...) asparagine glycan is linked to Asn742. The EGF-like 1 domain occupies 960-996 (PTDPCENNPCLHGGTCHTNGTVYGCSCDQGYAGENCE). 11 disulfide bridges follow: Cys964–Cys975, Cys969–Cys984, Cys986–Cys995, Cys1002–Cys1013, Cys1007–Cys1022, Cys1024–Cys1033, Cys1040–Cys1051, Cys1068–Cys1160, Cys1136–Cys1152, Cys1167–Cys1210, and Cys1196–Cys1223. N-linked (GlcNAc...) asparagine glycosylation occurs at Asn978. An EGF-like 2; calcium-binding domain is found at 998–1034 (DIDDCLCSPCENGGTCIDEVNGFICLCLPSYGGSLCE). The C-type lectin domain maps to 1036 to 1165 (DTEGCDRGWH…LPYVCKKGTV (130 aa)). Residues 1165–1225 (VLCGPPPAVE…WDRPQIMCIK (61 aa)) form the Sushi domain. Asn1175 carries an N-linked (GlcNAc...) asparagine glycan. Over residues 1228–1255 (RSHRMRRHHHHPHRHHKPRKEHRKHKRH) the composition is skewed to basic residues. Residues 1228–1268 (RSHRMRRHHHHPHRHHKPRKEHRKHKRHPAEDWEKDEGDFC) are disordered.

It belongs to the aggrecan/versican proteoglycan family. O-glycosylated; contains chondroitin sulfate. In terms of tissue distribution, brain.

It is found in the secreted. Its function is as follows. May modulate neuronal adhesion and neurite growth during development by binding to neural cell adhesion molecules (NG-CAM and N-CAM). Chondroitin sulfate proteoglycan; binds to hyaluronic acid. This is Neurocan core protein (Ncan) from Mus musculus (Mouse).